The primary structure comprises 195 residues: Large ribosomal subunit protein bL9 (195 aa).

Belongs to the bacterial ribosomal protein bL9 family.

Functionally, binds to the 23S rRNA. In Rhodopseudomonas palustris (strain TIE-1), this protein is Large ribosomal subunit protein bL9.